The following is a 132-amino-acid chain: Small ribosomal subunit protein eS6 (132 aa).

Belongs to the eukaryotic ribosomal protein eS6 family.

This Methanosphaerula palustris (strain ATCC BAA-1556 / DSM 19958 / E1-9c) protein is Small ribosomal subunit protein eS6.